Here is a 703-residue protein sequence, read N- to C-terminus: Calpain-8 (703 aa).

The 300-residue stretch at 45–344 (LFKDPEFPAC…FSRLEICNLS (300 aa)) folds into the Calpain catalytic domain. Residues C105, H262, and N286 contribute to the active site. Residues 356 to 379 (WNLVLFNGHWTRGSTAGGCQNYPA) form a domain III region. EF-hand domains lie at 575-610 (FNIN…IQKY), 618-640 (DYNH…AGFT), and 670-703 (IRLE…CVLV). The Ca(2+) site is built by D588, N590, T592, T594, E599, D618, N620, S622, T624, and E629.

The protein belongs to the peptidase C2 family. As to quaternary structure, monomer and homooligomer. Interacts with COPS1/GPS1, COPB1, EYA2, NME2, NME4 and TOMM70. Ca(2+) is required as a cofactor. Undergoes autolytic cleavage between Ala-5 and Ala-6 which gives rise to fragments extending from Ala-6 to the C-terminus, Ala-6 to the EF-hand 2 domain and from Ala-6 to the beginning of domain III. Stomach.

It localises to the cytoplasm. The protein localises to the golgi apparatus. The catalysed reaction is Broad endopeptidase specificity.. Calcium-regulated non-lysosomal thiol-protease. Involved in membrane trafficking in the gastric surface mucus cells (pit cells) and may involve the membrane trafficking of mucus cells via interactions with coat protein. Proteolytically cleaves the beta-subunit of coatomer complex. The polypeptide is Calpain-8 (CAPN8) (Homo sapiens (Human)).